The chain runs to 105 residues: Large ribosomal subunit protein uL24 (105 aa).

It belongs to the universal ribosomal protein uL24 family. As to quaternary structure, part of the 50S ribosomal subunit.

Its function is as follows. One of two assembly initiator proteins, it binds directly to the 5'-end of the 23S rRNA, where it nucleates assembly of the 50S subunit. One of the proteins that surrounds the polypeptide exit tunnel on the outside of the subunit. The sequence is that of Large ribosomal subunit protein uL24 from Saccharophagus degradans (strain 2-40 / ATCC 43961 / DSM 17024).